Consider the following 287-residue polypeptide: Nucleotide-binding protein VV0445 (287 aa).

ATP is bound at residue 8-15 (GHSGAGKS). 56–59 (DVRN) is a GTP binding site.

It belongs to the RapZ-like family.

Its function is as follows. Displays ATPase and GTPase activities. The chain is Nucleotide-binding protein VV0445 from Vibrio vulnificus (strain YJ016).